A 223-amino-acid chain; its full sequence is PKHD-type hydroxylase syc1482_d (223 aa).

Residues 78-176 (RVHSLLFSRY…RFACVGWVQS (99 aa)) enclose the Fe2OG dioxygenase domain. 3 residues coordinate Fe cation: H96, D98, and H157. R167 contributes to the 2-oxoglutarate binding site.

Fe(2+) serves as cofactor. L-ascorbate is required as a cofactor.

The chain is PKHD-type hydroxylase syc1482_d from Synechococcus sp. (strain ATCC 27144 / PCC 6301 / SAUG 1402/1) (Anacystis nidulans).